Reading from the N-terminus, the 910-residue chain is DNA mismatch repair protein MutS (910 aa).

615 to 622 (GPNMAGKS) is a binding site for ATP.

Belongs to the DNA mismatch repair MutS family.

Its function is as follows. This protein is involved in the repair of mismatches in DNA. It is possible that it carries out the mismatch recognition step. This protein has a weak ATPase activity. The sequence is that of DNA mismatch repair protein MutS from Clostridium perfringens (strain ATCC 13124 / DSM 756 / JCM 1290 / NCIMB 6125 / NCTC 8237 / Type A).